The following is a 103-amino-acid chain: RNA-binding protein Hfq (103 aa).

Residues 9-68 (DPFLNALRRERVPVSIYLVNGIKLQGQIESFDQFVILLKNTVSQMVYKHAISTVVPSRPV) enclose the Sm domain. Residues 63 to 103 (VPSRPVSHHSNNAGGGTGSNFHHGSNAQGSSAPAQDSDETE) are disordered. A compositionally biased stretch (polar residues) spans 81-96 (SNFHHGSNAQGSSAPA).

The protein belongs to the Hfq family. In terms of assembly, homohexamer.

Its function is as follows. RNA chaperone that binds small regulatory RNA (sRNAs) and mRNAs to facilitate mRNA translational regulation in response to envelope stress, environmental stress and changes in metabolite concentrations. Also binds with high specificity to tRNAs. This is RNA-binding protein Hfq from Enterobacter sp. (strain 638).